The chain runs to 358 residues: Probable RNA methyltransferase MXAN_6459 (358 aa).

Catalysis depends on Glu-92, which acts as the Proton acceptor. A Radical SAM core domain is found at Phe-99–Lys-327. Cysteines 106 and 333 form a disulfide. The [4Fe-4S] cluster site is built by Cys-113, Cys-117, and Cys-120. Residues Gly-160 to Glu-161, Ser-192, Ser-215 to Thr-217, and Asp-289 each bind S-adenosyl-L-methionine. Cys-333 functions as the S-methylcysteine intermediate in the catalytic mechanism.

It belongs to the radical SAM superfamily. RlmN family. [4Fe-4S] cluster serves as cofactor.

Its subcellular location is the cytoplasm. The protein is Probable RNA methyltransferase MXAN_6459 of Myxococcus xanthus (strain DK1622).